The chain runs to 471 residues: MADSDLLVTISGAALSLLFFENVRSVGNQMGFLLGEALEFIVKTYTDSDNQVETVKIHINVEAIVTCPLADLLHDSTNHINKEKLKDFVRDKSKQVIGWFCFRRNTTNLTLTLKDKLLHKQFASHFSGVNGCKEDFFLTCLLNASTSETSGTHKFRHVFLRHNKRGMFEPISLKINNLGDDASRHDGSDYKPTPVRKSTRTPDSFTKLIESLNLDVARIDGLDSAMLIQKAAEHHLMSLIPKVCESDLEVAELEKQVHELKIKIATQQLAKRLKINGENCDRISKASKDNCFSEKIDSSKKNEVRIGDDACLQREHIPSCTQSVGPNNRTVCRNTAACIAKSAEKSRRAGRSNLQESGNQQQETQNFFTNSRRSIPEIATESICQEGSEISMGRGRGSGRGSHEFTPGMKKIRRTPGTSHMHSSRERSTTPPEQDFSDAECPISSPVLRSYSQVTKKTNLDKCNSMAPLDI.

The MPN domain occupies 7-161 (LVTISGAALS…THKFRHVFLR (155 aa)). The stretch at 245-272 (ESDLEVAELEKQVHELKIKIATQQLAKR) forms a coiled coil. Residues 343–445 (AEKSRRAGRS…FSDAECPISS (103 aa)) are disordered. Positions 359-370 (NQQQETQNFFTN) are enriched in low complexity.

It belongs to the FAM175 family. Abro1 subfamily. Component of the BRISC complex, at least composed of FAM175B/ABRO1, BRCC3/BRCC36, BABAM2 and BABAM1/NBA1. Within the complex, interacts directly with BRCC3/BRCC36. The heterodimer with BRCC3/BRCC36 assembles into a heterotetramer. The BRISC complex binds polyubiquitin.

It localises to the cytoplasm. The protein localises to the nucleus. Its subcellular location is the cytoskeleton. The protein resides in the spindle pole. Component of the BRISC complex that specifically cleaves 'Lys-63'-linked polyubiquitin, leaving the last ubiquitin chain attached to its substrates. Does not have activity by itself, but the catalytic subunit BRCC3/BRCC36 needs to be associated into a heterotetramer with FAM175B for minimal in vitro activity. May act as a central scaffold protein that assembles the various components of the BRISC complex and retains them in the cytoplasm. Plays a role in regulating the onset of apoptosis via its role in modulating 'Lys-63'-linked ubiquitination of target proteins. Required for normal mitotic spindle assembly and microtubule attachment to kinetochores via its role in deubiquitinating numa1. This chain is BRISC complex subunit FAM175B, found in Camponotus floridanus (Florida carpenter ant).